We begin with the raw amino-acid sequence, 242 residues long: 1-(5-phosphoribosyl)-5-[(5-phosphoribosylamino)methylideneamino] imidazole-4-carboxamide isomerase (242 aa).

Asp-10 functions as the Proton acceptor in the catalytic mechanism. Asp-132 acts as the Proton donor in catalysis.

This sequence belongs to the HisA/HisF family.

Its subcellular location is the cytoplasm. The catalysed reaction is 1-(5-phospho-beta-D-ribosyl)-5-[(5-phospho-beta-D-ribosylamino)methylideneamino]imidazole-4-carboxamide = 5-[(5-phospho-1-deoxy-D-ribulos-1-ylimino)methylamino]-1-(5-phospho-beta-D-ribosyl)imidazole-4-carboxamide. The protein operates within amino-acid biosynthesis; L-histidine biosynthesis; L-histidine from 5-phospho-alpha-D-ribose 1-diphosphate: step 4/9. The sequence is that of 1-(5-phosphoribosyl)-5-[(5-phosphoribosylamino)methylideneamino] imidazole-4-carboxamide isomerase from Methanopyrus kandleri (strain AV19 / DSM 6324 / JCM 9639 / NBRC 100938).